Consider the following 1162-residue polypeptide: Sialidase (1162 aa).

BNR repeat units lie at residues 23–34, 163–174, and 209–220; these read KYSVDDGETWET, FYSEDDGKTWKF, and YESSDMEKPWVE. 2 N-linked (GlcNAc...) asparagine glycosylation sites follow: asparagine 342 and asparagine 394. The interval 587-1123 is disordered; the sequence is HMDSSSDSSA…STPSTPAGSS (537 aa). Over residues 589 to 615 the composition is skewed to low complexity; that stretch reads DSSSDSSAHSTPSTPADSSAHSTPSTP. A 44 X 12 AA tandem repeats, LTR domain region spans residues 589–1120; sequence DSSSDSSAHS…SAHSTPSTPA (532 aa). 2 stretches are compositionally biased toward polar residues: residues 616 to 689 and 699 to 1123; these read VDSS…TPVD and PADS…AGSS. N-linked (GlcNAc...) asparagine glycosylation is present at asparagine 1125.

Belongs to the glycosyl hydrolase 33 family.

It is found in the cell membrane. It catalyses the reaction Hydrolysis of alpha-(2-&gt;3)-, alpha-(2-&gt;6)-, alpha-(2-&gt;8)- glycosidic linkages of terminal sialic acid residues in oligosaccharides, glycoproteins, glycolipids, colominic acid and synthetic substrates.. Functionally, developmentally regulated neuraminidase implicated in parasite invasion of cells. The sequence is that of Sialidase (TCNA) from Trypanosoma cruzi.